Reading from the N-terminus, the 244-residue chain is Probable transcriptional regulatory protein Aasi_0624 (244 aa).

This sequence belongs to the TACO1 family.

It is found in the cytoplasm. This chain is Probable transcriptional regulatory protein Aasi_0624, found in Amoebophilus asiaticus (strain 5a2).